The primary structure comprises 122 residues: Large ribosomal subunit protein uL14 (122 aa).

This sequence belongs to the universal ribosomal protein uL14 family. Part of the 50S ribosomal subunit. Forms a cluster with proteins L3 and L19. In the 70S ribosome, L14 and L19 interact and together make contacts with the 16S rRNA in bridges B5 and B8.

In terms of biological role, binds to 23S rRNA. Forms part of two intersubunit bridges in the 70S ribosome. The protein is Large ribosomal subunit protein uL14 of Salinispora tropica (strain ATCC BAA-916 / DSM 44818 / JCM 13857 / NBRC 105044 / CNB-440).